The sequence spans 449 residues: Tubulin alpha chain (449 aa).

Glutamine 11 is a binding site for GTP. Lysine 40 bears the N6-acetyllysine mark. Residues glutamate 71, serine 140, glycine 144, threonine 145, threonine 179, asparagine 206, and asparagine 228 each coordinate GTP. Mg(2+) is bound at residue glutamate 71. Glutamate 254 is an active-site residue.

It belongs to the tubulin family. In terms of assembly, dimer of alpha and beta chains. A typical microtubule is a hollow water-filled tube with an outer diameter of 25 nm and an inner diameter of 15 nM. Alpha-beta heterodimers associate head-to-tail to form protofilaments running lengthwise along the microtubule wall with the beta-tubulin subunit facing the microtubule plus end conferring a structural polarity. Microtubules usually have 13 protofilaments but different protofilament numbers can be found in some organisms and specialized cells. Mg(2+) serves as cofactor. Post-translationally, undergoes a tyrosination/detyrosination cycle, the cyclic removal and re-addition of a C-terminal tyrosine residue by the enzymes tubulin tyrosine carboxypeptidase (TTCP) and tubulin tyrosine ligase (TTL), respectively. Acetylation of alpha chains at Lys-40 stabilizes microtubules and affects affinity and processivity of microtubule motors. This modification has a role in multiple cellular functions, ranging from cell motility, cell cycle progression or cell differentiation to intracellular trafficking and signaling.

It localises to the cytoplasm. It is found in the cytoskeleton. It catalyses the reaction GTP + H2O = GDP + phosphate + H(+). Its function is as follows. Tubulin is the major constituent of microtubules, a cylinder consisting of laterally associated linear protofilaments composed of alpha- and beta-tubulin heterodimers. Microtubules grow by the addition of GTP-tubulin dimers to the microtubule end, where a stabilizing cap forms. Below the cap, tubulin dimers are in GDP-bound state, owing to GTPase activity of alpha-tubulin. The protein is Tubulin alpha chain of Tetrahymena pyriformis.